The sequence spans 798 residues: General transcription and DNA repair factor IIH helicase/translocase subunit XPB (798 aa).

Disordered stretches follow at residues 1-62 (MGPP…EQIN) and 235-254 (PPGA…GADG). A Nuclear localization signal motif is present at residues 6–22 (KSRKDRSGGDKFGKKRR). A compositionally biased stretch (basic and acidic residues) spans 10-25 (DRSGGDKFGKKRRAED). Over residues 33-42 (DDNDSLDATE) the composition is skewed to acidic residues. A Helicase ATP-binding domain is found at 343-504 (MFGNGRARSG…DLNFLIGPKL (162 aa)). 360-367 (AGKSLVGV) lines the ATP pocket. Positions 457 to 460 (DEVH) match the DEVH box motif. The 156-residue stretch at 558–713 (RSCQFLIKYH…KVITHLKGMD (156 aa)) folds into the Helicase C-terminal domain. A disordered region spans residues 746–765 (LPGEPGYRPSGSGGAVRRVG).

This sequence belongs to the helicase family. RAD25/XPB subfamily. In terms of assembly, component of the 7-subunit TFIIH core complex composed of haywire/XPB/ERCC3, XPD/ERCC2, GTF2H1, GTF2H2, GTF2H3, GTF2H4 and GTF2H5, which is active in NER. The core complex associates with the 3-subunit CDK-activating kinase (CAK) module composed of CCNH/cyclin H, CDK7 and MNAT1 to form the 10-subunit holoenzyme (holo-TFIIH) active in transcription. Interacts with PUF60. Interacts with ATF7IP. Interacts with Epstein-Barr virus EBNA2.

It localises to the nucleus. The enzyme catalyses Couples ATP hydrolysis with the unwinding of duplex DNA by translocating in the 3'-5' direction.. It carries out the reaction ATP + H2O = ADP + phosphate + H(+). Its function is as follows. ATP-dependent 3'-5' DNA helicase/translocase; binds dsDNA rather than ssDNA, unzipping it in a translocase rather than classical helicase activity. Component of the general transcription and DNA repair factor IIH (TFIIH) core complex. When complexed to CDK-activating kinase (CAK), involved in RNA transcription by RNA polymerase II. The ATPase activity of XPB/ERCC3, but not its helicase activity, is required for DNA opening; it may wrap around the damaged DNA wedging it open, causing localized melting and twisting that allows XPD/ERCC2 helicase to anchor. The ATP-dependent helicase activity of XPB/ERCC3 may be required for promoter escape. Also involved in transcription-coupled nucleotide excision repair (NER) of damaged DNA. In NER, TFIIH acts by opening DNA around the lesion to allow the excision of the damaged oligonucleotide and its replacement by a new DNA fragment. The structure of the TFIIH transcription complex differs from the NER-TFIIH complex; large movements by XPD/ERCC2 and XPB/ERCC3 are stabilized by XPA. The chain is General transcription and DNA repair factor IIH helicase/translocase subunit XPB (hay) from Drosophila melanogaster (Fruit fly).